Here is a 681-residue protein sequence, read N- to C-terminus: Proline dehydrogenase 1, mitochondrial (681 aa).

The transit peptide at 1 to 30 (MALLRSLSAQRTAISLVYGRNSSKSSNSVA) directs the protein to the mitochondrion. Residues 76 to 87 (STLVQPEVVSSE) show a composition bias toward polar residues. Disordered regions lie at residues 76 to 113 (STLV…QRDP) and 216 to 239 (EEAE…EGSM). Basic and acidic residues predominate over residues 88-99 (TVKRSMKQESSQ).

Belongs to the proline oxidase family. Requires FAD as cofactor. As to expression, most abundant in developing nervous system.

It localises to the mitochondrion matrix. It catalyses the reaction L-proline + a quinone = (S)-1-pyrroline-5-carboxylate + a quinol + H(+). The protein operates within amino-acid degradation; L-proline degradation into L-glutamate; L-glutamate from L-proline: step 1/2. Functionally, converts proline to delta-1-pyrroline-5-carboxylate. Involved in the conversion of proline to glutamate, which functions as a transmitter at neuromuscular junctions. Glutamate deficiency could possibly account for reduced motor activity. The sequence is that of Proline dehydrogenase 1, mitochondrial (slgA) from Drosophila melanogaster (Fruit fly).